The chain runs to 239 residues: Phosphoribosylaminoimidazole-succinocarboxamide synthase (239 aa).

The protein belongs to the SAICAR synthetase family.

The catalysed reaction is 5-amino-1-(5-phospho-D-ribosyl)imidazole-4-carboxylate + L-aspartate + ATP = (2S)-2-[5-amino-1-(5-phospho-beta-D-ribosyl)imidazole-4-carboxamido]succinate + ADP + phosphate + 2 H(+). It participates in purine metabolism; IMP biosynthesis via de novo pathway; 5-amino-1-(5-phospho-D-ribosyl)imidazole-4-carboxamide from 5-amino-1-(5-phospho-D-ribosyl)imidazole-4-carboxylate: step 1/2. This is Phosphoribosylaminoimidazole-succinocarboxamide synthase from Bacillus cereus (strain G9842).